A 225-amino-acid chain; its full sequence is Peptidyl-tRNA hydrolase (225 aa).

Tyr-14 provides a ligand contact to tRNA. His-19 serves as the catalytic Proton acceptor. TRNA is bound by residues Phe-64, Asn-66, and Asn-112. A disordered region spans residues 187-225 (MQPPKPEKPKGEAKPAAPEAPEAAPDTRSALQRLADRFR). Low complexity predominate over residues 200–210 (KPAAPEAPEAA).

Belongs to the PTH family. Monomer.

The protein localises to the cytoplasm. It carries out the reaction an N-acyl-L-alpha-aminoacyl-tRNA + H2O = an N-acyl-L-amino acid + a tRNA + H(+). In terms of biological role, hydrolyzes ribosome-free peptidyl-tRNAs (with 1 or more amino acids incorporated), which drop off the ribosome during protein synthesis, or as a result of ribosome stalling. Catalyzes the release of premature peptidyl moieties from peptidyl-tRNA molecules trapped in stalled 50S ribosomal subunits, and thus maintains levels of free tRNAs and 50S ribosomes. In Cereibacter sphaeroides (strain ATCC 17025 / ATH 2.4.3) (Rhodobacter sphaeroides), this protein is Peptidyl-tRNA hydrolase.